The chain runs to 564 residues: Homeobox protein unc-62 (564 aa).

Disordered stretches follow at residues 40-59, 216-270, 293-313, 328-397, and 455-503; these read NEQFNDGYGPPPGSASADPA, ERAS…VMGG, SSSSNQAGDHPLANGGTLHST, PSTC…KVPK, and IDQN…PSSL. Positions 133–218 constitute an MEIS N-terminal domain; the sequence is SSDVCSSASF…PLDIVGDERA (86 aa). Residues 219-230 show a composition bias toward low complexity; the sequence is SSSQPPMSPGSM. Polar residues-rich tracts occupy residues 328 to 344 and 381 to 390; these read PSTCSSGGLRQDSTPLS and LSDSANGSQN. Positions 392 to 454 form a DNA-binding region, homeobox; TALE-type; it reads KRKVPKVFSK…NARRRIVQPM (63 aa). Polar residues-rich tracts occupy residues 455 to 469 and 494 to 503; these read IDQNNRAGRSGQMNV and ANYSPDPSSL.

It belongs to the TALE/MEIS homeobox family. In terms of assembly, forms a heterodimer with homeobox ceh-60.

It localises to the nucleus. Functionally, acts redundantly with ceh-20 and ceh-40 to perform overlapping roles during embryogenesis. Required for postembryonic development of the ectoderm, including the Q, V and P cell lineages, playing a crucial role in ensuring that these cells and their descendants undergo their invariant patterns of cell division, migration, fusion and morphogenesis. Has a role in the mig-13 pathway to promote anterior migration of neuroblasts in the Q lineage. Required for multiple roles in regulating vulva development. Associates with homeobox ceh-60 to regulate gene expression, including repression of genes involved in innate immunity and activation of genes involved in vitellogenesis. Involved in lipid homeostasis, contributing to the formation of the cuticle. This is Homeobox protein unc-62 (unc-62) from Caenorhabditis elegans.